Reading from the N-terminus, the 453-residue chain is Vitamin D3 receptor A (453 aa).

Residues 53–128 constitute a DNA-binding region (nuclear receptor); that stretch reads PRICGVCGDK…IGMMKEFILT (76 aa). Positions 56, 59, 73, 76, 92, 98, 108, and 111 each coordinate Zn(2+). 2 NR C4-type zinc fingers span residues 56 to 76 and 92 to 111; these read CGVC…CEGC and CPFN…CQAC. The segment at 129 to 158 is hinge; it reads DEEVQRKKDLIMKRKEEEAAREARKPRLSD. Residues 159–449 enclose the NR LBD domain; that stretch reads EQMQIINSLV…LTPLVLEVFG (291 aa). Residues Tyr175 and Ser265 each contribute to the calcitriol site. Residues 274 to 292 are interaction with coactivator LXXLL motif; sequence KMIPGFRDLTAEDQIALLK. Calcitriol contacts are provided by Arg302, Ser306, His333, and His423. The 9aaTAD motif lies at 442–450; that stretch reads PLVLEVFGS.

It belongs to the nuclear hormone receptor family. NR1 subfamily. In terms of assembly, homodimer in the absence of bound vitamin D3. Heterodimer with RXRA after vitamin D3 binding. Interacts with ncoa1 and possibly other coactivators, leading to a strong increase of transcription of target genes. In terms of tissue distribution, detected in embryo 24 to 48 hours after fertilization and in gastrula.

The protein localises to the nucleus. It localises to the cytoplasm. Nuclear receptor for calcitriol, the active form of vitamin D3 which mediates the action of this vitamin on cells. Enters the nucleus upon vitamin D3 binding where it forms heterodimers with the retinoid X receptor/RXR. The VDR-RXR heterodimers bind to specific response elements on DNA and activate the transcription of vitamin D3-responsive target genes. Recruited to promoters via its interaction with BAZ1B/WSTF which mediates the interaction with acetylated histones, an essential step for VDR-promoter association. Plays a central role in calcium homeostasis. This Danio rerio (Zebrafish) protein is Vitamin D3 receptor A (vdra).